Here is a 358-residue protein sequence, read N- to C-terminus: Vascular endothelial growth factor D (358 aa).

A signal peptide spans methionine 1–glycine 21. The propeptide occupies phenylalanine 22 to arginine 93. Cystine bridges form between cysteine 116/cysteine 158, cysteine 147/cysteine 194, and cysteine 151/cysteine 196. Asparagine 160 and asparagine 190 each carry an N-linked (GlcNAc...) asparagine glycan. A propeptide spanning residues serine 211–proline 358 is cleaved from the precursor. One copy of the 1; approximate repeat lies at cysteine 227–leucine 242. Residues cysteine 227 to cysteine 323 are 4 X 16 AA repeats of C-X(10)-C-X-C-X(1,3)-C. Repeat copies occupy residues cysteine 263–cysteine 278, cysteine 282–cysteine 298, and cysteine 306–cysteine 323. Asparagine 292 is a glycosylation site (N-linked (GlcNAc...) asparagine).

It belongs to the PDGF/VEGF growth factor family. As to quaternary structure, homodimer; non-covalent and antiparallel. Undergoes a complex proteolytic maturation which generates a variety of processed secreted forms with increased activity toward VEGFR-3 and VEGFR-2. VEGF-D first form an antiparallel homodimer linked by disulfide bonds before secretion. The fully processed VEGF-D is composed mostly of two VEGF homology domains (VHDs) bound by non-covalent interactions. Highly expressed in fetal and adult lung.

Its subcellular location is the secreted. Growth factor active in angiogenesis, lymphangiogenesis and endothelial cell growth, stimulating their proliferation and migration and also has effects on the permeability of blood vessels. May function in the formation of the venous and lymphatic vascular systems during embryogenesis, and also in the maintenance of differentiated lymphatic endothelium in adults. Binds and activates VEGFR-3 (Flt4) receptor. The protein is Vascular endothelial growth factor D of Mus musculus (Mouse).